The chain runs to 147 residues: Cyanate hydratase (147 aa).

Residues R88, E91, and S114 contribute to the active site.

The protein belongs to the cyanase family.

It catalyses the reaction cyanate + hydrogencarbonate + 3 H(+) = NH4(+) + 2 CO2. Catalyzes the reaction of cyanate with bicarbonate to produce ammonia and carbon dioxide. This chain is Cyanate hydratase, found in Prochlorococcus marinus subsp. pastoris (strain CCMP1986 / NIES-2087 / MED4).